The following is a 158-amino-acid chain: Small ribosomal subunit protein uS9 (158 aa).

The span at 1-10 (MSDTMQSLDQ) shows a compositional bias: polar residues. The tract at residues 1–35 (MSDTMQSLDQLSALKTAAPDAPKREKKVDKQGRAY) is disordered. Over residues 21 to 32 (APKREKKVDKQG) the composition is skewed to basic and acidic residues.

It belongs to the universal ribosomal protein uS9 family.

The protein is Small ribosomal subunit protein uS9 of Afipia carboxidovorans (strain ATCC 49405 / DSM 1227 / KCTC 32145 / OM5) (Oligotropha carboxidovorans).